The chain runs to 66 residues: Large ribosomal subunit protein bL35 (66 aa).

Positions 24–43 (HKKAGKRHNLSKKSKARKRR) are enriched in basic residues. Residues 24–44 (HKKAGKRHNLSKKSKARKRRL) are disordered.

The protein belongs to the bacterial ribosomal protein bL35 family.

This chain is Large ribosomal subunit protein bL35, found in Dictyoglomus thermophilum (strain ATCC 35947 / DSM 3960 / H-6-12).